Reading from the N-terminus, the 140-residue chain is Ribosome maturation factor RimP (140 aa).

This sequence belongs to the RimP family.

The protein localises to the cytoplasm. Functionally, required for maturation of 30S ribosomal subunits. This chain is Ribosome maturation factor RimP, found in Campylobacter hominis (strain ATCC BAA-381 / DSM 21671 / CCUG 45161 / LMG 19568 / NCTC 13146 / CH001A).